A 403-amino-acid chain; its full sequence is Dual-specificity RNA methyltransferase RlmN (403 aa).

The active-site Proton acceptor is glutamate 121. Residues 127–375 (ETDRGTLCVS…VRTPRGRDIL (249 aa)) form the Radical SAM core domain. A disulfide bond links cysteine 134 and cysteine 378. [4Fe-4S] cluster-binding residues include cysteine 141, cysteine 145, and cysteine 148. S-adenosyl-L-methionine-binding positions include 204 to 205 (GE), serine 236, 258 to 260 (SLH), and asparagine 335. The S-methylcysteine intermediate role is filled by cysteine 378.

The protein belongs to the radical SAM superfamily. RlmN family. [4Fe-4S] cluster serves as cofactor.

It localises to the cytoplasm. It carries out the reaction adenosine(2503) in 23S rRNA + 2 reduced [2Fe-2S]-[ferredoxin] + 2 S-adenosyl-L-methionine = 2-methyladenosine(2503) in 23S rRNA + 5'-deoxyadenosine + L-methionine + 2 oxidized [2Fe-2S]-[ferredoxin] + S-adenosyl-L-homocysteine. It catalyses the reaction adenosine(37) in tRNA + 2 reduced [2Fe-2S]-[ferredoxin] + 2 S-adenosyl-L-methionine = 2-methyladenosine(37) in tRNA + 5'-deoxyadenosine + L-methionine + 2 oxidized [2Fe-2S]-[ferredoxin] + S-adenosyl-L-homocysteine. Functionally, specifically methylates position 2 of adenine 2503 in 23S rRNA and position 2 of adenine 37 in tRNAs. m2A2503 modification seems to play a crucial role in the proofreading step occurring at the peptidyl transferase center and thus would serve to optimize ribosomal fidelity. This is Dual-specificity RNA methyltransferase RlmN from Rhodopseudomonas palustris (strain BisA53).